The chain runs to 397 residues: 1-deoxy-D-xylulose 5-phosphate reductoisomerase (397 aa).

The NADPH site is built by Thr-12, Gly-13, Ser-14, Ile-15, Gly-38, Lys-39, Asn-40, and Asn-126. Lys-127 provides a ligand contact to 1-deoxy-D-xylulose 5-phosphate. Residue Glu-128 coordinates NADPH. Mn(2+) is bound at residue Asp-152. Residues Ser-153, Glu-154, Ser-188, and His-211 each contribute to the 1-deoxy-D-xylulose 5-phosphate site. A Mn(2+)-binding site is contributed by Glu-154. Gly-217 lines the NADPH pocket. Residues Ser-224, Asn-229, Lys-230, and Glu-233 each coordinate 1-deoxy-D-xylulose 5-phosphate. Glu-233 is a binding site for Mn(2+).

It belongs to the DXR family. Mg(2+) is required as a cofactor. Requires Mn(2+) as cofactor.

The enzyme catalyses 2-C-methyl-D-erythritol 4-phosphate + NADP(+) = 1-deoxy-D-xylulose 5-phosphate + NADPH + H(+). It functions in the pathway isoprenoid biosynthesis; isopentenyl diphosphate biosynthesis via DXP pathway; isopentenyl diphosphate from 1-deoxy-D-xylulose 5-phosphate: step 1/6. Its function is as follows. Catalyzes the NADPH-dependent rearrangement and reduction of 1-deoxy-D-xylulose-5-phosphate (DXP) to 2-C-methyl-D-erythritol 4-phosphate (MEP). The chain is 1-deoxy-D-xylulose 5-phosphate reductoisomerase from Haemophilus influenzae (strain 86-028NP).